The primary structure comprises 303 residues: Signal recognition particle receptor FtsY (303 aa).

GTP contacts are provided by residues 108–115, 190–194, and 254–257; these read GVNGVGKT, DTAGR, and TKLD.

Belongs to the GTP-binding SRP family. FtsY subfamily. In terms of assembly, part of the signal recognition particle protein translocation system, which is composed of SRP and FtsY. SRP is a ribonucleoprotein composed of Ffh and a 4.5S RNA molecule.

It is found in the cell inner membrane. The protein resides in the cytoplasm. The enzyme catalyses GTP + H2O = GDP + phosphate + H(+). Its function is as follows. Involved in targeting and insertion of nascent membrane proteins into the cytoplasmic membrane. Acts as a receptor for the complex formed by the signal recognition particle (SRP) and the ribosome-nascent chain (RNC). Interaction with SRP-RNC leads to the transfer of the RNC complex to the Sec translocase for insertion into the membrane, the hydrolysis of GTP by both Ffh and FtsY, and the dissociation of the SRP-FtsY complex into the individual components. In Rickettsia prowazekii (strain Madrid E), this protein is Signal recognition particle receptor FtsY.